Reading from the N-terminus, the 1058-residue chain is Carbamoyl phosphate synthase large chain (1058 aa).

The interval 1–401 (MAKRTDIKKI…CLLKACRSLE (401 aa)) is carboxyphosphate synthetic domain. ATP is bound by residues R129, R169, G175, G176, R208, I210, E215, G241, I242, H243, Q284, and E298. Residues 133–327 (KQLMKELGEP…IAKIAAKIAV (195 aa)) enclose the ATP-grasp 1 domain. 3 residues coordinate Mg(2+): Q284, E298, and N300. Residues Q284, E298, and N300 each coordinate Mn(2+). Residues 402–546 (IGVHHNELKG…YSTYEWENES (145 aa)) form an oligomerization domain region. Positions 547 to 929 (IKSEKESVIV…ALYKAFEASY (383 aa)) are carbamoyl phosphate synthetic domain. The ATP-grasp 2 domain occupies 671–861 (EKALKELGIP…MAQVATKLIL (191 aa)). 10 residues coordinate ATP: R707, S746, I748, E752, G777, V778, H779, S780, Q820, and E832. 3 residues coordinate Mg(2+): Q820, E832, and N834. Mn(2+) is bound by residues Q820, E832, and N834. Residues 930 to 1058 (LHMPEYGTIV…ESRTFSIEAI (129 aa)) enclose the MGS-like domain. The allosteric domain stretch occupies residues 930–1058 (LHMPEYGTIV…ESRTFSIEAI (129 aa)).

It belongs to the CarB family. Composed of two chains; the small (or glutamine) chain promotes the hydrolysis of glutamine to ammonia, which is used by the large (or ammonia) chain to synthesize carbamoyl phosphate. Tetramer of heterodimers (alpha,beta)4. Mg(2+) serves as cofactor. Requires Mn(2+) as cofactor.

The enzyme catalyses hydrogencarbonate + L-glutamine + 2 ATP + H2O = carbamoyl phosphate + L-glutamate + 2 ADP + phosphate + 2 H(+). It carries out the reaction hydrogencarbonate + NH4(+) + 2 ATP = carbamoyl phosphate + 2 ADP + phosphate + 2 H(+). It participates in amino-acid biosynthesis; L-arginine biosynthesis; carbamoyl phosphate from bicarbonate: step 1/1. The protein operates within pyrimidine metabolism; UMP biosynthesis via de novo pathway; (S)-dihydroorotate from bicarbonate: step 1/3. Functionally, large subunit of the glutamine-dependent carbamoyl phosphate synthetase (CPSase). CPSase catalyzes the formation of carbamoyl phosphate from the ammonia moiety of glutamine, carbonate, and phosphate donated by ATP, constituting the first step of 2 biosynthetic pathways, one leading to arginine and/or urea and the other to pyrimidine nucleotides. The large subunit (synthetase) binds the substrates ammonia (free or transferred from glutamine from the small subunit), hydrogencarbonate and ATP and carries out an ATP-coupled ligase reaction, activating hydrogencarbonate by forming carboxy phosphate which reacts with ammonia to form carbamoyl phosphate. The chain is Carbamoyl phosphate synthase large chain from Streptococcus equi subsp. equi (strain 4047).